The chain runs to 367 residues: MTAFKRIFSPALLVLALYGGAAHAALVPPQGYYEGIEKIKTSDGNFRCESAPKPFTGALQFRSKYEGSDKARATLNRDSEQAFRDSTKDITTLERGVAKMVNQYMRDGRPAQLDCTLTWLGTWARADALMSTNYNHTGKSMRKWALGSMSGSWLRLKFSNSQPLAAHQAEAELIEKWFARLAEQTVRDWSNLPLEKINNHSYWAAWSVMATAVATDRRDLFDWAVKEYKVGANQIDDQGFLPNEIKRKQRALAYHNYALPPLAMIASFAKANGVDLRSENNFALQRLGEGVLYGARDPRHFAERAGEKQDMKDLKVDGKYAWLEPWCALYQCVGDTLERKHRMQPFDSFRLGGNLTRVYDPSAQSKK.

The N-terminal stretch at 1–24 is a signal peptide; it reads MTAFKRIFSPALLVLALYGGAAHA. Residues 63–64, 136–137, and Tyr-254 each bind substrate; these read SK and HT.

This sequence belongs to the polysaccharide lyase 5 family.

It is found in the periplasm. The catalysed reaction is Eliminative cleavage of alginate to give oligosaccharides with 4-deoxy-alpha-L-erythro-hex-4-enuronosyl groups at their non-reducing ends and beta-D-mannuronate at their reducing end.. In terms of biological role, catalyzes the depolymerization of alginate by cleaving the beta-1,4 glycosidic bond between two adjacent sugar residues via a beta-elimination mechanism. May serve to degrade mislocalized alginate that is trapped in the periplasmic space. The protein is Alginate lyase of Pseudomonas putida (strain W619).